The following is a 303-amino-acid chain: 4-diphosphocytidyl-2-C-methyl-D-erythritol kinase (303 aa).

The active site involves Lys-21. ATP is bound at residue 106 to 116 (PVAAGIGGGSA). Asp-148 is an active-site residue.

The protein belongs to the GHMP kinase family. IspE subfamily.

The enzyme catalyses 4-CDP-2-C-methyl-D-erythritol + ATP = 4-CDP-2-C-methyl-D-erythritol 2-phosphate + ADP + H(+). It functions in the pathway isoprenoid biosynthesis; isopentenyl diphosphate biosynthesis via DXP pathway; isopentenyl diphosphate from 1-deoxy-D-xylulose 5-phosphate: step 3/6. Catalyzes the phosphorylation of the position 2 hydroxy group of 4-diphosphocytidyl-2C-methyl-D-erythritol. The sequence is that of 4-diphosphocytidyl-2-C-methyl-D-erythritol kinase from Nitrobacter hamburgensis (strain DSM 10229 / NCIMB 13809 / X14).